We begin with the raw amino-acid sequence, 146 residues long: Hemoglobin subunit beta-1 (146 aa).

Residues 2 to 146 enclose the Globin domain; the sequence is KWTDKERAVI…VVSALGKQYC (145 aa). Residues histidine 63 and histidine 92 each coordinate heme b.

The protein belongs to the globin family. Heterotetramer of two alpha chains and two beta chains. As to expression, red blood cells.

Its function is as follows. Involved in oxygen transport from gills to the various peripheral tissues. The polypeptide is Hemoglobin subunit beta-1 (Lycodes reticulatus (Arctic eelpout)).